A 232-amino-acid chain; its full sequence is Cysteine proteinase inhibitor 7 (232 aa).

The signal sequence occupies residues Met1–Cys29. 2 Cystatin domains span residues Gly46–Ile135 and Phe152–Asn214. The short motif at Gln91–Gly95 is the Secondary area of contact element. Residue Ser181 is modified to Phosphoserine.

It belongs to the cystatin family. Phytocystatin subfamily.

The protein localises to the secreted. In terms of biological role, specific inhibitor of cysteine proteinases. Probably involved in the regulation of endogenous processes and in defense against pests and pathogens. The chain is Cysteine proteinase inhibitor 7 (CYS7) from Arabidopsis thaliana (Mouse-ear cress).